A 226-amino-acid chain; its full sequence is Cytidylate kinase (226 aa).

Residue 12–20 participates in ATP binding; the sequence is GPSGAGKGT.

This sequence belongs to the cytidylate kinase family. Type 1 subfamily.

The protein resides in the cytoplasm. It catalyses the reaction CMP + ATP = CDP + ADP. The catalysed reaction is dCMP + ATP = dCDP + ADP. This chain is Cytidylate kinase, found in Xanthomonas campestris pv. campestris (strain B100).